We begin with the raw amino-acid sequence, 177 residues long: Isopentenyl-diphosphate Delta-isomerase (177 aa).

Histidine 22 and histidine 28 together coordinate Mn(2+). The region spanning 26–160 (LRHMAISVFV…PERFTPWLRI (135 aa)) is the Nudix hydrolase domain. Cysteine 62 is a catalytic residue. Histidine 64 contributes to the Mn(2+) binding site. Glutamate 82 provides a ligand contact to Mg(2+). Positions 108 and 110 each coordinate Mn(2+). Glutamate 110 is an active-site residue.

The protein belongs to the IPP isomerase type 1 family. The cofactor is Mg(2+). Requires Mn(2+) as cofactor.

Its subcellular location is the cytoplasm. The catalysed reaction is isopentenyl diphosphate = dimethylallyl diphosphate. It functions in the pathway isoprenoid biosynthesis; dimethylallyl diphosphate biosynthesis; dimethylallyl diphosphate from isopentenyl diphosphate: step 1/1. It participates in porphyrin-containing compound metabolism; chlorophyll biosynthesis. Its function is as follows. Catalyzes the 1,3-allylic rearrangement of the homoallylic substrate isopentenyl (IPP) to its highly electrophilic allylic isomer, dimethylallyl diphosphate (DMAPP). This chain is Isopentenyl-diphosphate Delta-isomerase, found in Cereibacter sphaeroides (strain ATCC 17029 / ATH 2.4.9) (Rhodobacter sphaeroides).